A 329-amino-acid polypeptide reads, in one-letter code: Biotin synthase (329 aa).

A Radical SAM core domain is found at 48 to 278 (FVGDKVYLCS…SKKISVCGGR (231 aa)). 3 residues coordinate [4Fe-4S] cluster: Cys66, Cys70, and Cys73. Ser143 and Cys203 together coordinate [2Fe-2S] cluster.

The protein belongs to the radical SAM superfamily. Biotin synthase family. As to quaternary structure, homodimer. The cofactor is [4Fe-4S] cluster. It depends on [2Fe-2S] cluster as a cofactor.

The enzyme catalyses (4R,5S)-dethiobiotin + (sulfur carrier)-SH + 2 reduced [2Fe-2S]-[ferredoxin] + 2 S-adenosyl-L-methionine = (sulfur carrier)-H + biotin + 2 5'-deoxyadenosine + 2 L-methionine + 2 oxidized [2Fe-2S]-[ferredoxin]. It functions in the pathway cofactor biosynthesis; biotin biosynthesis; biotin from 7,8-diaminononanoate: step 2/2. Its function is as follows. Catalyzes the conversion of dethiobiotin (DTB) to biotin by the insertion of a sulfur atom into dethiobiotin via a radical-based mechanism. This Geotalea uraniireducens (strain Rf4) (Geobacter uraniireducens) protein is Biotin synthase.